Consider the following 1755-residue polypeptide: Transposon Ty1-GR1 Gag-Pol polyprotein (1755 aa).

Positions 1 to 16 are enriched in low complexity; that stretch reads MESQQLSQHSHISHGS. Disordered stretches follow at residues 1-93, 126-173, and 352-421; these read MESQ…MMTQ, PQSQ…RPPP, and GSRN…SKST. 3 stretches are compositionally biased toward polar residues: residues 48–60, 71–93, and 127–152; these read TKAN…TPAS, SPQT…MMTQ, and QSQF…GNTF. A compositionally biased stretch (low complexity) spans 153–165; the sequence is TDSSSADSDMTST. The segment at 299 to 401 is RNA-binding; the sequence is NNGIHINNKV…NSKSKTARAH (103 aa). Over residues 402–418 the composition is skewed to low complexity; it reads NVSTSNNSPSTDNDSIS. Phosphoserine is present on S416. D461 acts as the For protease activity; shared with dimeric partner in catalysis. The tract at residues 583–640 is integrase-type zinc finger-like; it reads NVHTSESTRKYPYPFIHRMLAHANAQTIRYSLKNNTITYFNESDVDWSSAIDYQCPDC. In terms of domain architecture, Integrase catalytic spans 660 to 835; it reads NSYEPFQYLH…AGLDISTLLP (176 aa). Mg(2+) is bound by residues D671 and D736. 3 disordered regions span residues 956-1087, 1092-1111, and 1130-1187; these read SKAV…ETEK, RSPS…NIVP, and DLPL…DNET. A compositionally biased stretch (low complexity) spans 960–969; sequence SPTDSTPPST. Positions 1005-1015 are enriched in polar residues; it reads STPQISNIEST. The segment covering 1038–1053 has biased composition (basic and acidic residues); the sequence is ESSHASKSKDFRHSDS. 2 stretches are compositionally biased toward polar residues: residues 1054 to 1082 and 1101 to 1111; these read YSEN…QISD and PENNSSHNIVP. The Bipartite nuclear localization signal motif lies at 1178–1212; the sequence is KKRSLEDNETEIKVSRDTWNTKNMRSLEPPRSKKR. Positions 1338–1476 constitute a Reverse transcriptase Ty1/copia-type domain; sequence NNYYITQLDI…DILGLEIKYQ (139 aa). Mg(2+) is bound by residues D1346, D1427, D1428, D1610, E1652, and D1685. The RNase H Ty1/copia-type domain maps to 1610–1752; sequence DASYGNQPYY…IKTFKLLTNK (143 aa).

The capsid protein forms a homotrimer, from which the VLPs are assembled. The protease is a homodimer, whose active site consists of two apposed aspartic acid residues. Post-translationally, initially, virus-like particles (VLPs) are composed of the structural unprocessed proteins Gag and Gag-Pol, and also contain the host initiator methionine tRNA (tRNA(i)-Met) which serves as a primer for minus-strand DNA synthesis, and a dimer of genomic Ty RNA. Processing of the polyproteins occurs within the particle and proceeds by an ordered pathway, called maturation. First, the protease (PR) is released by autocatalytic cleavage of the Gag-Pol polyprotein yielding capsid protein p45 and a Pol-p154 precursor protein. This cleavage is a prerequisite for subsequent processing of Pol-p154 at the remaining sites to release the mature structural and catalytic proteins. Maturation takes place prior to the RT reaction and is required to produce transposition-competent VLPs.

It is found in the cytoplasm. It localises to the nucleus. It carries out the reaction DNA(n) + a 2'-deoxyribonucleoside 5'-triphosphate = DNA(n+1) + diphosphate. The catalysed reaction is Endonucleolytic cleavage to 5'-phosphomonoester.. In terms of biological role, capsid protein (CA) is the structural component of the virus-like particle (VLP), forming the shell that encapsulates the retrotransposons dimeric RNA genome. The particles are assembled from trimer-clustered units and there are holes in the capsid shells that allow for the diffusion of macromolecules. CA also has nucleocapsid-like chaperone activity, promoting primer tRNA(i)-Met annealing to the multipartite primer-binding site (PBS), dimerization of Ty1 RNA and initiation of reverse transcription. The aspartyl protease (PR) mediates the proteolytic cleavages of the Gag and Gag-Pol polyproteins after assembly of the VLP. Functionally, reverse transcriptase/ribonuclease H (RT) is a multifunctional enzyme that catalyzes the conversion of the retro-elements RNA genome into dsDNA within the VLP. The enzyme displays a DNA polymerase activity that can copy either DNA or RNA templates, and a ribonuclease H (RNase H) activity that cleaves the RNA strand of RNA-DNA heteroduplexes during plus-strand synthesis and hydrolyzes RNA primers. The conversion leads to a linear dsDNA copy of the retrotransposon that includes long terminal repeats (LTRs) at both ends. Its function is as follows. Integrase (IN) targets the VLP to the nucleus, where a subparticle preintegration complex (PIC) containing at least integrase and the newly synthesized dsDNA copy of the retrotransposon must transit the nuclear membrane. Once in the nucleus, integrase performs the integration of the dsDNA into the host genome. The sequence is that of Transposon Ty1-GR1 Gag-Pol polyprotein (TY1B-GR1) from Saccharomyces cerevisiae (strain ATCC 204508 / S288c) (Baker's yeast).